The sequence spans 137 residues: MTEECGEIVFWTLRKKFVASSDEMPEHSSQVMYYSLAIGHHVGVIDCLNVAFRCPLTEYEDWLALVEEEQARRKMLGVMTFGEIVIDASHTALLTRAFAPLADDATSVWQARSIQFIHLLDEIVQEPAIYLMARKIA.

It to E.coli HycH.

In terms of biological role, possible component of hydrogenase 4. In Escherichia coli (strain K12), this protein is Hydrogenase-4 component J.